The chain runs to 59 residues: Photosystem II reaction center protein K (59 aa).

Residues 1–22 (MLNIFSLICLNSDLYSSRFFLA) constitute a propeptide that is removed on maturation. Residues 38-58 (MPVIPLFFLLLAFVWQAAVSF) traverse the membrane as a helical segment.

This sequence belongs to the PsbK family. PSII is composed of 1 copy each of membrane proteins PsbA, PsbB, PsbC, PsbD, PsbE, PsbF, PsbH, PsbI, PsbJ, PsbK, PsbL, PsbM, PsbT, PsbX, PsbY, PsbZ, Psb30/Ycf12, at least 3 peripheral proteins of the oxygen-evolving complex and a large number of cofactors. It forms dimeric complexes.

It localises to the plastid. Its subcellular location is the chloroplast thylakoid membrane. Its function is as follows. One of the components of the core complex of photosystem II (PSII). PSII is a light-driven water:plastoquinone oxidoreductase that uses light energy to abstract electrons from H(2)O, generating O(2) and a proton gradient subsequently used for ATP formation. It consists of a core antenna complex that captures photons, and an electron transfer chain that converts photonic excitation into a charge separation. The sequence is that of Photosystem II reaction center protein K from Oenothera elata subsp. hookeri (Hooker's evening primrose).